The chain runs to 290 residues: Elongation factor Ts (290 aa).

The tract at residues 79–82 is involved in Mg(2+) ion dislocation from EF-Tu; the sequence is TDFV.

The protein belongs to the EF-Ts family.

The protein resides in the cytoplasm. In terms of biological role, associates with the EF-Tu.GDP complex and induces the exchange of GDP to GTP. It remains bound to the aminoacyl-tRNA.EF-Tu.GTP complex up to the GTP hydrolysis stage on the ribosome. This Pseudoalteromonas atlantica (strain T6c / ATCC BAA-1087) protein is Elongation factor Ts.